The sequence spans 309 residues: Syndecan-1 (309 aa).

A signal peptide spans 1–22 (MRRAALWLWLCALALRLQPVLP). Residues 24–253 (IMAVNVPPED…GLLDRKEVLG (230 aa)) lie on the Extracellular side of the membrane. 2 disordered regions span residues 28-57 (NVPP…DITL) and 142-185 (ARAT…GGTS). A compositionally biased stretch (acidic residues) spans 32–42 (EDQDGSGDDSD). S37 carries O-linked (Xyl...) (chondroitin sulfate) serine glycosylation. Residue N43 is glycosylated (N-linked (GlcNAc...) asparagine). S45 and S47 each carry an O-linked (Xyl...) (heparan sulfate) serine glycan. Polar residues predominate over residues 142–151 (ARATTAQAPV). 2 O-linked (Xyl...) (chondroitin sulfate) serine glycosylation sites follow: S205 and S215. The chain crosses the membrane as a helical span at residues 254–274 (GVIAGGLVGLIFAVCLVGFML). Over 275-309 (YRMKKKDEGSYSLEEPKQANGGAYQKPTKQEEFYA) the chain is Cytoplasmic. The segment at 283–309 (GSYSLEEPKQANGGAYQKPTKQEEFYA) is disordered. S284 is subject to Phosphoserine.

The protein belongs to the syndecan proteoglycan family. As to quaternary structure, interacts with CDCP1. Interacts (via C-terminus) with TIAM1 (via PDZ domain). Interacts with MDK. In terms of processing, shedding is enhanced by a number of factors such as heparanase, thrombin or EGF. Also by stress and wound healing. PMA-mediated shedding is inhibited by TIMP3.

It localises to the membrane. The protein resides in the secreted. It is found in the extracellular exosome. Functionally, cell surface proteoglycan that contains both heparan sulfate and chondroitin sulfate and that links the cytoskeleton to the interstitial matrix. Regulates exosome biogenesis in concert with SDCBP and PDCD6IP. Able to induce its own expression in dental mesenchymal cells and also in the neighboring dental epithelial cells via an MSX1-mediated pathway. The sequence is that of Syndecan-1 from Cricetulus griseus (Chinese hamster).